The primary structure comprises 169 residues: Phosphopantetheine adenylyltransferase (169 aa).

A substrate-binding site is contributed by threonine 14. ATP is bound by residues 14-15 and histidine 22; that span reads TF. Residues lysine 46, leucine 78, and arginine 92 each coordinate substrate. ATP-binding positions include 93–95, glutamate 103, and 128–134; these read GLR and HSFISSS.

Belongs to the bacterial CoaD family. In terms of assembly, homohexamer. Requires Mg(2+) as cofactor.

The protein resides in the cytoplasm. It catalyses the reaction (R)-4'-phosphopantetheine + ATP + H(+) = 3'-dephospho-CoA + diphosphate. It participates in cofactor biosynthesis; coenzyme A biosynthesis; CoA from (R)-pantothenate: step 4/5. Its function is as follows. Reversibly transfers an adenylyl group from ATP to 4'-phosphopantetheine, yielding dephospho-CoA (dPCoA) and pyrophosphate. This chain is Phosphopantetheine adenylyltransferase, found in Stenotrophomonas maltophilia (strain K279a).